A 155-amino-acid chain; its full sequence is Endoribonuclease YbeY (155 aa).

Zn(2+) is bound by residues histidine 114, histidine 118, and histidine 124.

The protein belongs to the endoribonuclease YbeY family. It depends on Zn(2+) as a cofactor.

It is found in the cytoplasm. Single strand-specific metallo-endoribonuclease involved in late-stage 70S ribosome quality control and in maturation of the 3' terminus of the 16S rRNA. This is Endoribonuclease YbeY from Escherichia coli O157:H7.